Here is a 212-residue protein sequence, read N- to C-terminus: Ras-related protein Rab-2A (212 aa).

Positions 16, 17, 18, 19, 20, 21, and 38 each coordinate GTP. Serine 20 serves as a coordination point for Mg(2+). The Switch 1 signature appears at leucine 37–glutamate 42. Threonine 38 and aspartate 61 together coordinate Mg(2+). A Switch 2 motif is present at residues alanine 63–threonine 72. The GTP site is built by glycine 64, asparagine 119, lysine 120, aspartate 122, alanine 150, and lysine 151. Residues cysteine 211 and cysteine 212 are each lipidated (S-geranylgeranyl cysteine).

Belongs to the small GTPase superfamily. Rab family. In terms of assembly, interacts with PRKCI. Interacts with TRIP11. Interacts (in GTP-bound form) with GARIN1B. Mg(2+) serves as cofactor. Post-translationally, prenylated. Prenylation is required for association with cellular membranes.

It is found in the endoplasmic reticulum-Golgi intermediate compartment membrane. It localises to the melanosome. The protein resides in the endoplasmic reticulum membrane. The protein localises to the golgi apparatus membrane. Its subcellular location is the cytoplasmic vesicle. It is found in the secretory vesicle. It localises to the acrosome. It catalyses the reaction GTP + H2O = GDP + phosphate + H(+). Its activity is regulated as follows. Regulated by guanine nucleotide exchange factors (GEFs) which promote the exchange of bound GDP for free GTP, GTPase activating proteins (GAPs) which increase the GTP hydrolysis activity, and GDP dissociation inhibitors (GDIs) which inhibit the dissociation of the nucleotide from the GTPase. The small GTPases Rab are key regulators of intracellular membrane trafficking, from the formation of transport vesicles to their fusion with membranes. Rabs cycle between active GTP-bound and inactive GDP-bound states. In their active state, drive transport of vesicular carriers from donor organelles to acceptor organelles to regulate the membrane traffic that maintains organelle identity and morphology. RAB2A regulates autophagy by promoting autophagosome-lysosome fusion via recruitment of the HOPS endosomal tethering complex; this process involves autophagosomal RAB2A and lysosomal RAB39A recruitment of HOPS subcomplexes VPS39-VPS11 and VPS41-VPS16-VPS18-VPS33A, respectively, which assemble into a functional complex to mediate membrane tethering and SNAREs-driven membrane fusion. Required for protein transport from the endoplasmic reticulum to the Golgi complex. Regulates the compacted morphology of the Golgi. Together with RAB2B, redundantly required for efficient autophagic flux. This Gallus gallus (Chicken) protein is Ras-related protein Rab-2A (RAB2A).